A 316-amino-acid chain; its full sequence is Ribonuclease Z (316 aa).

Zn(2+) contacts are provided by His61, His63, Asp65, His66, His152, Asp220, and His279. Residue Asp65 is the Proton acceptor of the active site.

It belongs to the RNase Z family. In terms of assembly, homodimer. Requires Zn(2+) as cofactor.

The catalysed reaction is Endonucleolytic cleavage of RNA, removing extra 3' nucleotides from tRNA precursor, generating 3' termini of tRNAs. A 3'-hydroxy group is left at the tRNA terminus and a 5'-phosphoryl group is left at the trailer molecule.. Zinc phosphodiesterase, which displays some tRNA 3'-processing endonuclease activity. Probably involved in tRNA maturation, by removing a 3'-trailer from precursor tRNA. This Clostridium perfringens (strain ATCC 13124 / DSM 756 / JCM 1290 / NCIMB 6125 / NCTC 8237 / Type A) protein is Ribonuclease Z.